The chain runs to 185 residues: Inner membrane-spanning protein YciB (185 aa).

5 consecutive transmembrane segments (helical) span residues I19–W39, T49–H69, T72–T92, G122–F142, and F150–I170.

The protein belongs to the YciB family.

The protein localises to the cell inner membrane. Plays a role in cell envelope biogenesis, maintenance of cell envelope integrity and membrane homeostasis. The polypeptide is Inner membrane-spanning protein YciB (Acidithiobacillus ferrooxidans (strain ATCC 23270 / DSM 14882 / CIP 104768 / NCIMB 8455) (Ferrobacillus ferrooxidans (strain ATCC 23270))).